The chain runs to 463 residues: Bifunctional protein HldE (463 aa).

The ribokinase stretch occupies residues 1–315 (MRKILVIGDL…LILNQTHPKI (315 aa)). ATP is bound at residue 191 to 194 (NRFE). Asp-260 is a catalytic residue. Positions 334 to 463 (FTNGCFDILH…IEKIKRAYND (130 aa)) are cytidylyltransferase.

It in the N-terminal section; belongs to the carbohydrate kinase PfkB family. This sequence in the C-terminal section; belongs to the cytidylyltransferase family. As to quaternary structure, homodimer.

It carries out the reaction D-glycero-beta-D-manno-heptose 7-phosphate + ATP = D-glycero-beta-D-manno-heptose 1,7-bisphosphate + ADP + H(+). It catalyses the reaction D-glycero-beta-D-manno-heptose 1-phosphate + ATP + H(+) = ADP-D-glycero-beta-D-manno-heptose + diphosphate. Its pathway is nucleotide-sugar biosynthesis; ADP-L-glycero-beta-D-manno-heptose biosynthesis; ADP-L-glycero-beta-D-manno-heptose from D-glycero-beta-D-manno-heptose 7-phosphate: step 1/4. The protein operates within nucleotide-sugar biosynthesis; ADP-L-glycero-beta-D-manno-heptose biosynthesis; ADP-L-glycero-beta-D-manno-heptose from D-glycero-beta-D-manno-heptose 7-phosphate: step 3/4. Its function is as follows. Catalyzes the phosphorylation of D-glycero-D-manno-heptose 7-phosphate at the C-1 position to selectively form D-glycero-beta-D-manno-heptose-1,7-bisphosphate. Functionally, catalyzes the ADP transfer from ATP to D-glycero-beta-D-manno-heptose 1-phosphate, yielding ADP-D-glycero-beta-D-manno-heptose. This is Bifunctional protein HldE from Helicobacter acinonychis (strain Sheeba).